We begin with the raw amino-acid sequence, 356 residues long: S-adenosylmethionine:tRNA ribosyltransferase-isomerase (356 aa).

It belongs to the QueA family. Monomer.

It localises to the cytoplasm. It catalyses the reaction 7-aminomethyl-7-carbaguanosine(34) in tRNA + S-adenosyl-L-methionine = epoxyqueuosine(34) in tRNA + adenine + L-methionine + 2 H(+). It functions in the pathway tRNA modification; tRNA-queuosine biosynthesis. Transfers and isomerizes the ribose moiety from AdoMet to the 7-aminomethyl group of 7-deazaguanine (preQ1-tRNA) to give epoxyqueuosine (oQ-tRNA). This Escherichia coli (strain 55989 / EAEC) protein is S-adenosylmethionine:tRNA ribosyltransferase-isomerase.